The chain runs to 334 residues: Protein CapI (334 aa).

Serine 126 contributes to the substrate binding site. Tyrosine 151 serves as the catalytic Proton acceptor.

This sequence belongs to the NAD(P)-dependent epimerase/dehydratase family.

The protein operates within capsule biogenesis; capsule polysaccharide biosynthesis. Functionally, required for the biosynthesis of type 1 capsular polysaccharide. The sequence is that of Protein CapI (capI) from Staphylococcus aureus.